Consider the following 379-residue polypeptide: Queuine tRNA-ribosyltransferase (379 aa).

The active-site Proton acceptor is D94. Substrate is bound by residues D94–F98, D148, Q191, and G218. Residues G249 to S255 are RNA binding. Catalysis depends on D268, which acts as the Nucleophile. Residues T273–R277 form an RNA binding; important for wobble base 34 recognition region. C306, C308, C311, and H337 together coordinate Zn(2+).

It belongs to the queuine tRNA-ribosyltransferase family. In terms of assembly, homodimer. Within each dimer, one monomer is responsible for RNA recognition and catalysis, while the other monomer binds to the replacement base PreQ1. The cofactor is Zn(2+).

It catalyses the reaction 7-aminomethyl-7-carbaguanine + guanosine(34) in tRNA = 7-aminomethyl-7-carbaguanosine(34) in tRNA + guanine. It participates in tRNA modification; tRNA-queuosine biosynthesis. In terms of biological role, catalyzes the base-exchange of a guanine (G) residue with the queuine precursor 7-aminomethyl-7-deazaguanine (PreQ1) at position 34 (anticodon wobble position) in tRNAs with GU(N) anticodons (tRNA-Asp, -Asn, -His and -Tyr). Catalysis occurs through a double-displacement mechanism. The nucleophile active site attacks the C1' of nucleotide 34 to detach the guanine base from the RNA, forming a covalent enzyme-RNA intermediate. The proton acceptor active site deprotonates the incoming PreQ1, allowing a nucleophilic attack on the C1' of the ribose to form the product. After dissociation, two additional enzymatic reactions on the tRNA convert PreQ1 to queuine (Q), resulting in the hypermodified nucleoside queuosine (7-(((4,5-cis-dihydroxy-2-cyclopenten-1-yl)amino)methyl)-7-deazaguanosine). This chain is Queuine tRNA-ribosyltransferase, found in Bacillus cereus (strain G9842).